The sequence spans 318 residues: 2-keto-3-deoxygluconate permease (318 aa).

Helical transmembrane passes span 10 to 30 (IPGG…TFTP), 42 to 62 (GLIT…GASI), 76 to 96 (VLVI…GTFL), 105 to 125 (LLAG…NGGL), 139 to 159 (AGAF…VILG), 162 to 182 (GIAT…LIGF), 199 to 219 (VQTL…LAVI), 224 to 244 (FAGI…LIIA), 263 to 283 (AGAA…FAPV), and 289 to 309 (ALVA…TALW).

The protein belongs to the KdgT transporter family.

It is found in the cell inner membrane. It catalyses the reaction 2-dehydro-3-deoxy-D-gluconate(in) + H(+)(in) = 2-dehydro-3-deoxy-D-gluconate(out) + H(+)(out). In terms of biological role, catalyzes the proton-dependent uptake of 2-keto-3-deoxygluconate (KDG) into the cell. The chain is 2-keto-3-deoxygluconate permease from Pectobacterium carotovorum subsp. carotovorum (strain PC1).